A 146-amino-acid chain; its full sequence is MNLTDLRPADGSKQSGNFRRGRGHGSGNGKTAGKGHKGQKARSGAPRVGFEGGQMPLYRRLPKRGFKNRNTKEIISVNVSMLNRFEDGADVTLESLREIGIISNPKDGVKILGNGELTKKLNVKVSAFSESAIEKIKALGGNAEVI.

Residues Met-1 to Gln-54 form a disordered region.

The protein belongs to the universal ribosomal protein uL15 family. As to quaternary structure, part of the 50S ribosomal subunit.

In terms of biological role, binds to the 23S rRNA. In Lachnoclostridium phytofermentans (strain ATCC 700394 / DSM 18823 / ISDg) (Clostridium phytofermentans), this protein is Large ribosomal subunit protein uL15.